Reading from the N-terminus, the 88-residue chain is Parvalbumin beta 3 (88 aa).

Ala1 carries the post-translational modification N-acetylalanine. Positions 31–66 (KSPEEVKKFFAIIDQDHSGFIEEEELKLFLQTFSAG) constitute an EF-hand domain. The Ca(2+) site is built by Asp44, Asp46, Ser48, Phe50, Glu52, Glu55, and Glu81.

Belongs to the parvalbumin family.

Its function is as follows. In muscle, parvalbumin is thought to be involved in relaxation after contraction. It binds two calcium ions. In Merluccius productus (North Pacific hake), this protein is Parvalbumin beta 3.